We begin with the raw amino-acid sequence, 995 residues long: Protein translocase subunit SecA (995 aa).

Residues Gln86, 104–108, and Asp535 each bind ATP; that span reads GEGKT. Residues 883–911 form a disordered region; it reads AQTVSSDGNGEVVRKPQRRSTPQIGRNEL. Positions 912, 914, 923, and 924 each coordinate Zn(2+). The interval 939–995 is disordered; sequence PSAPPASKALKSTPATQTAVAEEAAKIQAAINSGKLPPTQTTPRGRQAPSVPRGKKR. Residues 957-969 show a composition bias toward low complexity; that stretch reads AVAEEAAKIQAAI.

The protein belongs to the SecA family. In terms of assembly, monomer and homodimer. Part of the essential Sec protein translocation apparatus which comprises SecA, SecYEG and auxiliary proteins SecDF. Other proteins may also be involved. Zn(2+) serves as cofactor.

It is found in the cell membrane. The protein localises to the cytoplasm. The catalysed reaction is ATP + H2O + cellular proteinSide 1 = ADP + phosphate + cellular proteinSide 2.. Functionally, part of the Sec protein translocase complex. Interacts with the SecYEG preprotein conducting channel. Has a central role in coupling the hydrolysis of ATP to the transfer of proteins into and across the cell membrane, serving as an ATP-driven molecular motor driving the stepwise translocation of polypeptide chains across the membrane. This Chloroflexus aurantiacus (strain ATCC 29366 / DSM 635 / J-10-fl) protein is Protein translocase subunit SecA.